A 146-amino-acid chain; its full sequence is uncharacterized protein (146 aa).

The next 4 helical transmembrane spans lie at 1–21, 35–55, 87–107, and 111–131; these read MFAN…AASL, AAVY…LFVG, GGAG…GVGH, and AIAA…GGHL.

The protein localises to the cell membrane. This is an uncharacterized protein from Mycobacterium tuberculosis (strain CDC 1551 / Oshkosh).